The following is a 556-amino-acid chain: Phenylalanine--tRNA ligase beta subunit (556 aa).

Positions 278 to 354 (LTPKEFEVSF…IAYGYNNIDP (77 aa)) constitute a B5 domain. Mg(2+) is bound by residues D332, D338, E341, and D342.

The protein belongs to the phenylalanyl-tRNA synthetase beta subunit family. Type 2 subfamily. As to quaternary structure, tetramer of two alpha and two beta subunits. Mg(2+) serves as cofactor.

Its subcellular location is the cytoplasm. The enzyme catalyses tRNA(Phe) + L-phenylalanine + ATP = L-phenylalanyl-tRNA(Phe) + AMP + diphosphate + H(+). In Pyrococcus furiosus (strain ATCC 43587 / DSM 3638 / JCM 8422 / Vc1), this protein is Phenylalanine--tRNA ligase beta subunit.